The sequence spans 716 residues: Translation initiation factor IF-2 (716 aa).

The disordered stretch occupies residues 50-137 (FKKSAKPAGN…KPKKELPEKI (88 aa)). Residues 92–101 (NNVQNTQFNN) are compositionally biased toward low complexity. Residues 102–118 (KNKKKNNNNKKNKRGKN) show a composition bias toward basic residues. The segment covering 125–137 (KQFKPKKELPEKI) has biased composition (basic and acidic residues). In terms of domain architecture, tr-type G spans 217–386 (IRPPVVTIMG…LLVSEVEELK (170 aa)). The G1 stretch occupies residues 226 to 233 (GHVDHGKT). 226 to 233 (GHVDHGKT) is a binding site for GTP. The G2 stretch occupies residues 251-255 (GITQH). A G3 region spans residues 272 to 275 (DTPG). Residues 272–276 (DTPGH) and 326–329 (NKID) each bind GTP. Positions 326-329 (NKID) are G4. The tract at residues 362 to 364 (SAL) is G5.

The protein belongs to the TRAFAC class translation factor GTPase superfamily. Classic translation factor GTPase family. IF-2 subfamily.

The protein resides in the cytoplasm. Functionally, one of the essential components for the initiation of protein synthesis. Protects formylmethionyl-tRNA from spontaneous hydrolysis and promotes its binding to the 30S ribosomal subunits. Also involved in the hydrolysis of GTP during the formation of the 70S ribosomal complex. This is Translation initiation factor IF-2 from Bacillus licheniformis (strain ATCC 14580 / DSM 13 / JCM 2505 / CCUG 7422 / NBRC 12200 / NCIMB 9375 / NCTC 10341 / NRRL NRS-1264 / Gibson 46).